Reading from the N-terminus, the 502-residue chain is uncharacterized protein (502 aa).

A helical membrane pass occupies residues 1 to 21 (MKIFLVFLSVFFFNGCFGLVY). PLD phosphodiesterase domains follow at residues 162–189 (IKKR…GDNY) and 396–423 (TKHS…DPRS).

This sequence belongs to the phospholipase D family. Cardiolipin synthase subfamily.

It is found in the cell membrane. This is an uncharacterized protein from Helicobacter pylori (strain ATCC 700392 / 26695) (Campylobacter pylori).